A 321-amino-acid polypeptide reads, in one-letter code: tRNA-dihydrouridine synthase B (321 aa).

Residues 16–18 (PMA) and Gln70 contribute to the FMN site. Catalysis depends on Cys100, which acts as the Proton donor. FMN contacts are provided by residues Lys139, 200–202 (NGD), and 224–225 (GR).

The protein belongs to the Dus family. DusB subfamily. FMN is required as a cofactor.

It catalyses the reaction a 5,6-dihydrouridine in tRNA + NAD(+) = a uridine in tRNA + NADH + H(+). The enzyme catalyses a 5,6-dihydrouridine in tRNA + NADP(+) = a uridine in tRNA + NADPH + H(+). In terms of biological role, catalyzes the synthesis of 5,6-dihydrouridine (D), a modified base found in the D-loop of most tRNAs, via the reduction of the C5-C6 double bond in target uridines. The protein is tRNA-dihydrouridine synthase B of Klebsiella pneumoniae.